The primary structure comprises 187 residues: Peptidyl-tRNA hydrolase (187 aa).

Y14 contacts tRNA. Residue H19 is the Proton acceptor of the active site. The tRNA site is built by Y64, N66, and N112.

The protein belongs to the PTH family. Monomer.

It localises to the cytoplasm. It carries out the reaction an N-acyl-L-alpha-aminoacyl-tRNA + H2O = an N-acyl-L-amino acid + a tRNA + H(+). In terms of biological role, hydrolyzes ribosome-free peptidyl-tRNAs (with 1 or more amino acids incorporated), which drop off the ribosome during protein synthesis, or as a result of ribosome stalling. Catalyzes the release of premature peptidyl moieties from peptidyl-tRNA molecules trapped in stalled 50S ribosomal subunits, and thus maintains levels of free tRNAs and 50S ribosomes. This is Peptidyl-tRNA hydrolase from Clostridium acetobutylicum (strain ATCC 824 / DSM 792 / JCM 1419 / IAM 19013 / LMG 5710 / NBRC 13948 / NRRL B-527 / VKM B-1787 / 2291 / W).